The sequence spans 389 residues: 5-hydroxytryptamine receptor 1B (389 aa).

The disordered stretch occupies residues 1–27 (MEETNTHCAPPPPAGSQTGVSQANLSS). Residues 1-45 (MEETNTHCAPPPPAGSQTGVSQANLSSAPPNCSTEGYIYQDSIAL) are Extracellular-facing. Residues 15 to 27 (GSQTGVSQANLSS) show a composition bias toward polar residues. N-linked (GlcNAc...) asparagine glycans are attached at residues N24 and N31. Residues 46-71 (PWKVLLILVLALFTLATTLSNAFVIA) form a helical membrane-spanning segment. At 72-85 (TVYRTRKLHTPANY) the chain is on the cytoplasmic side. A helical membrane pass occupies residues 86-110 (LIASLAVTDLLVSILVMPISTMYTV). The Extracellular segment spans residues 111–118 (TGRWTLGQ). A helical membrane pass occupies residues 119 to 144 (VVCDFWLSSDITCCTASILHLCVIAL). C121 and C198 are joined by a disulfide. Residues D128 and T133 each contribute to the ergotamine site. The short motif at 145–147 (DRY) is the DRY motif; important for ligand-induced conformation changes and signaling element. At 145 to 164 (DRYWAITDAVEYSAKRTPKR) the chain is on the cytoplasmic side. Residues 165-183 (AAVMIALVWVFSISISLPP) traverse the membrane as a helical segment. Residues 184 to 204 (FFWRQAKAEEEVSDCRVNTDH) are Extracellular-facing. Position 200 (V200) interacts with ergotamine. The helical transmembrane segment at 205–228 (MLYTVYSTVGAFYFPTLLLIALYG) threads the bilayer. The Cytoplasmic segment spans residues 229–314 (RIYVEARSRI…AARERKATKT (86 aa)). A compositionally biased stretch (polar residues) spans 258 to 271 (DSPGSTSSVTSVNS). Residues 258 to 281 (DSPGSTSSVTSVNSRAPDVPSESG) are disordered. The helical transmembrane segment at 315-336 (LGIILGAFIVCWLPFFIISLVM) threads the bilayer. At 337-346 (PICKDACWFH) the chain is on the extracellular side. A helical transmembrane segment spans residues 347–369 (LAIFDFFTWLGYLNSLINPIIYT). The NPxxY motif; important for ligand-induced conformation changes and signaling signature appears at 364-368 (NPIIY). Residues 370-389 (MSNEDFKQAFHKLIRFKCTG) are Cytoplasmic-facing. C387 carries S-palmitoyl cysteine lipidation.

This sequence belongs to the G-protein coupled receptor 1 family. In terms of assembly, homodimer. Heterodimer with HTR1D. In terms of processing, phosphorylated. Desensitization of the receptor may be mediated by its phosphorylation. Post-translationally, palmitoylated.

The protein resides in the cell membrane. Its function is as follows. G-protein coupled receptor for 5-hydroxytryptamine (serotonin). Also functions as a receptor for ergot alkaloid derivatives, various anxiolytic and antidepressant drugs and other psychoactive substances, such as lysergic acid diethylamide (LSD). Ligand binding causes a conformation change that triggers signaling via guanine nucleotide-binding proteins (G proteins) and modulates the activity of downstream effectors, such as adenylate cyclase. HTR1B is coupled to G(i)/G(o) G alpha proteins and mediates inhibitory neurotransmission by inhibiting adenylate cyclase activity. Arrestin family members inhibit signaling via G proteins and mediate activation of alternative signaling pathways. Regulates the release of 5-hydroxytryptamine, dopamine and acetylcholine in the brain, and thereby affects neural activity, nociceptive processing, pain perception, mood and behavior. Besides, plays a role in vasoconstriction of cerebral arteries. The protein is 5-hydroxytryptamine receptor 1B (HTR1B) of Felis catus (Cat).